Here is a 354-residue protein sequence, read N- to C-terminus: Uroporphyrinogen decarboxylase (354 aa).

Residues 27 to 31 (RQAGR), aspartate 77, tyrosine 154, serine 209, and histidine 327 each bind substrate.

It belongs to the uroporphyrinogen decarboxylase family. Homodimer.

It is found in the cytoplasm. It catalyses the reaction uroporphyrinogen III + 4 H(+) = coproporphyrinogen III + 4 CO2. The protein operates within porphyrin-containing compound metabolism; protoporphyrin-IX biosynthesis; coproporphyrinogen-III from 5-aminolevulinate: step 4/4. In terms of biological role, catalyzes the decarboxylation of four acetate groups of uroporphyrinogen-III to yield coproporphyrinogen-III. The chain is Uroporphyrinogen decarboxylase from Teredinibacter turnerae (strain ATCC 39867 / T7901).